Here is a 50-residue protein sequence, read N- to C-terminus: Large ribosomal subunit protein bL33B (50 aa).

Belongs to the bacterial ribosomal protein bL33 family.

The chain is Large ribosomal subunit protein bL33B from Mycoplasmopsis agalactiae (strain NCTC 10123 / CIP 59.7 / PG2) (Mycoplasma agalactiae).